The primary structure comprises 555 residues: Cilia- and flagella-associated protein 184 (555 aa).

The segment covering 1–12 has biased composition (basic and acidic residues); that stretch reads MDVSSEHTKDPG. The interval 1 to 202 is disordered; sequence MDVSSEHTKD…KSQEEGKRLY (202 aa). Composition is skewed to acidic residues over residues 41 to 54 and 95 to 105; these read GELE…EEEQ and PEPEEPAEVGA. Low complexity predominate over residues 106 to 117; sequence EEPAQPEPGAGP. Residues 118–131 are compositionally biased toward acidic residues; the sequence is EELEAEAGAEELEQ. Residues 174 to 202 are compositionally biased toward basic and acidic residues; that stretch reads ETQRDGAESKERDGEGRPAKSQEEGKRLY. 2 coiled-coil regions span residues 305 to 441 and 505 to 531; these read YHQE…NSVQ and DSLL…LKRH.

Belongs to the CFAP184 family. Forms a complex with CFAP263; the interaction is required for functional activity in cilia.

It is found in the cell projection. The protein localises to the cilium. The protein resides in the cytoplasm. It localises to the cytoskeleton. Its subcellular location is the microtubule organizing center. It is found in the centrosome. In terms of biological role, in complex with CFAP263, acts as a regulator of ciliary beating that connects radial spoke 3 (RS3) to the inner dynein arm (IDA) and the nexin-dynein regulatory complex (N-DRC). The complex is positioned parallel to N-DRC and forms a connection between the arch at the base of RS3, the IDA tail and N-DRC. In Homo sapiens (Human), this protein is Cilia- and flagella-associated protein 184.